The following is a 145-amino-acid chain: Basic phospholipase A2 PC17 (145 aa).

Positions 1–21 (MYPAHLLLLLAVCVSLLGASA) are cleaved as a signal peptide. Positions 22–27 (IPPLPL) are excised as a propeptide. Disulfide bonds link C38-C98, C54-C144, C56-C72, C71-C125, C78-C118, C87-C111, and C105-C116. Ca(2+) contacts are provided by Y55, G57, and G59. H75 is a catalytic residue. Ca(2+) is bound at residue D76. D119 is an active-site residue.

It belongs to the phospholipase A2 family. Group I subfamily. D49 sub-subfamily. It depends on Ca(2+) as a cofactor.

Its subcellular location is the secreted. It carries out the reaction a 1,2-diacyl-sn-glycero-3-phosphocholine + H2O = a 1-acyl-sn-glycero-3-phosphocholine + a fatty acid + H(+). Functionally, PLA2 catalyzes the calcium-dependent hydrolysis of the 2-acyl groups in 3-sn-phosphoglycerides. The protein is Basic phospholipase A2 PC17 of Laticauda laticaudata (Blue-ringed sea krait).